We begin with the raw amino-acid sequence, 138 residues long: Biopolymer transport protein exbD1 (138 aa).

Residues 1-16 (MIKSSAKHNDFGLTPD) are Cytoplasmic-facing. The chain crosses the membrane as a helical span at residues 17–37 (LTPLLDIIFIVMVFLLLTASV). Over 38–138 (RLESLEVALP…TQLLTEPSHS (101 aa)) the chain is Periplasmic.

Belongs to the ExbD/TolR family. The accessory proteins ExbB and ExbD seem to form a complex with TonB.

The protein resides in the cell inner membrane. Involved in the TonB-dependent energy-dependent transport of various receptor-bound substrates. The sequence is that of Biopolymer transport protein exbD1 (exbD1) from Vibrio cholerae serotype O1 (strain ATCC 39315 / El Tor Inaba N16961).